We begin with the raw amino-acid sequence, 316 residues long: Ribose-phosphate pyrophosphokinase (316 aa).

Residues 41–43 (DGE) and 100–101 (RQ) contribute to the ATP site. Residues histidine 134 and aspartate 175 each contribute to the Mg(2+) site. Lysine 198 is an active-site residue. D-ribose 5-phosphate contacts are provided by residues arginine 200, aspartate 224, and 228–232 (DTARS).

The protein belongs to the ribose-phosphate pyrophosphokinase family. Class I subfamily. As to quaternary structure, homohexamer. The cofactor is Mg(2+).

It localises to the cytoplasm. The catalysed reaction is D-ribose 5-phosphate + ATP = 5-phospho-alpha-D-ribose 1-diphosphate + AMP + H(+). It participates in metabolic intermediate biosynthesis; 5-phospho-alpha-D-ribose 1-diphosphate biosynthesis; 5-phospho-alpha-D-ribose 1-diphosphate from D-ribose 5-phosphate (route I): step 1/1. In terms of biological role, involved in the biosynthesis of the central metabolite phospho-alpha-D-ribosyl-1-pyrophosphate (PRPP) via the transfer of pyrophosphoryl group from ATP to 1-hydroxyl of ribose-5-phosphate (Rib-5-P). The chain is Ribose-phosphate pyrophosphokinase from Thermosipho africanus (strain TCF52B).